A 347-amino-acid polypeptide reads, in one-letter code: Merozoite surface protein 2 (347 aa).

Residues 1-20 (MKVIKTLSIINFFIFVTFNI) form the signal peptide. N22 and N36 each carry an N-linked (GlcNAc...) asparagine glycan. The tract at residues 44-273 (AESKPPTGDG…EQTESPELQS (230 aa)) is polymorphic region. 22 repeat units span residues 53–60 (GAVASAGN), 61–68 (GAVASAGN), 69–76 (GAVASAGN), 77–84 (GAVASAGN), 85–88 (GAGN), 89–92 (GAGN), 93–96 (GAGN), 97–100 (GAGN), 101–104 (GAGN), 105–108 (GAGN), 109–112 (GAGN), 113–116 (GAGN), 117–120 (GAGN), 121–124 (GAGN), 125–128 (GAGN), 129–132 (GAGN), 133–136 (GAGN), 137–140 (GAGN), 141–144 (GAGN), 145–152 (GAVASAGN), 153–156 (GAGN), and 157–164 (GAVASAGN). Positions 53 to 164 (GAVASAGNGA…GNGAVASAGN (112 aa)) are 6 X 8 AA repeats of G-A-V-A-S-A-G-N. The tract at residues 85–156 (GAGNGAGNGA…VASAGNGAGN (72 aa)) is 16 X 4 AA repeats of G-A-G-N. Residues 165–206 (GAVAERSSSTPATTTTTTTTNDAEASTSTSSENSNHNNAETN) are compositionally biased toward low complexity. A disordered region spans residues 165–308 (GAVAERSSST…DSQKECTDGN (144 aa)). 2 stretches are compositionally biased toward polar residues: residues 213 to 240 (VQPN…NVPR) and 247 to 275 (KSPT…QSAP). A glycan (N-linked (GlcNAc...) asparagine) is linked at N224. N296 carries an N-linked (GlcNAc...) asparagine glycan. C304 and C312 form a disulfide bridge. 2 N-linked (GlcNAc...) asparagine glycosylation sites follow: N320 and N321. The GPI-anchor amidated asparagine moiety is linked to residue N321. Residues 322-347 (SSNIASINKFVVLISATLVLSFAIFI) constitute a propeptide, removed in mature form.

The protein localises to the cell membrane. Functionally, may play a role in the merozoite attachment to the erythrocyte. The chain is Merozoite surface protein 2 from Plasmodium falciparum (isolate Nig32 / Nigeria).